Here is a 479-residue protein sequence, read N- to C-terminus: Glycogen synthase (479 aa).

Lys-16 serves as a coordination point for ADP-alpha-D-glucose.

This sequence belongs to the glycosyltransferase 1 family. Bacterial/plant glycogen synthase subfamily.

It catalyses the reaction [(1-&gt;4)-alpha-D-glucosyl](n) + ADP-alpha-D-glucose = [(1-&gt;4)-alpha-D-glucosyl](n+1) + ADP + H(+). It participates in glycan biosynthesis; glycogen biosynthesis. Functionally, synthesizes alpha-1,4-glucan chains using ADP-glucose. The polypeptide is Glycogen synthase (Lactiplantibacillus plantarum (strain ATCC BAA-793 / NCIMB 8826 / WCFS1) (Lactobacillus plantarum)).